The chain runs to 290 residues: 4-hydroxybenzoate octaprenyltransferase (290 aa).

The next 8 membrane-spanning stretches (helical) occupy residues 23–43 (IGAL…TPGV), 46–66 (LWIM…GCVV), 99–119 (LFVV…TMTI), 141–161 (LPQV…FAAV), 163–183 (ESVP…AVAY), 213–233 (LIIG…GELN), 234–254 (GLGW…VYQQ), and 268–288 (AFMN…MSYW).

Belongs to the UbiA prenyltransferase family. The cofactor is Mg(2+).

The protein localises to the cell inner membrane. It carries out the reaction all-trans-octaprenyl diphosphate + 4-hydroxybenzoate = 4-hydroxy-3-(all-trans-octaprenyl)benzoate + diphosphate. Its pathway is cofactor biosynthesis; ubiquinone biosynthesis. Its function is as follows. Catalyzes the prenylation of para-hydroxybenzoate (PHB) with an all-trans polyprenyl group. Mediates the second step in the final reaction sequence of ubiquinone-8 (UQ-8) biosynthesis, which is the condensation of the polyisoprenoid side chain with PHB, generating the first membrane-bound Q intermediate 3-octaprenyl-4-hydroxybenzoate. The sequence is that of 4-hydroxybenzoate octaprenyltransferase from Shigella flexneri.